Reading from the N-terminus, the 130-residue chain is S-adenosylmethionine decarboxylase proenzyme (130 aa).

Catalysis depends on Ser63, which acts as the Schiff-base intermediate with substrate; via pyruvic acid. Residue Ser63 is modified to Pyruvic acid (Ser); by autocatalysis. His68 functions as the Proton acceptor; for processing activity in the catalytic mechanism. The Proton donor; for catalytic activity role is filled by Cys83.

It belongs to the prokaryotic AdoMetDC family. Type 1 subfamily. As to quaternary structure, heterotetramer of two alpha and two beta chains arranged as a dimer of alpha/beta heterodimers. Pyruvate serves as cofactor. In terms of processing, is synthesized initially as an inactive proenzyme. Formation of the active enzyme involves a self-maturation process in which the active site pyruvoyl group is generated from an internal serine residue via an autocatalytic post-translational modification. Two non-identical subunits are generated from the proenzyme in this reaction, and the pyruvate is formed at the N-terminus of the alpha chain, which is derived from the carboxyl end of the proenzyme. The post-translation cleavage follows an unusual pathway, termed non-hydrolytic serinolysis, in which the side chain hydroxyl group of the serine supplies its oxygen atom to form the C-terminus of the beta chain, while the remainder of the serine residue undergoes an oxidative deamination to produce ammonia and the pyruvoyl group blocking the N-terminus of the alpha chain.

The catalysed reaction is S-adenosyl-L-methionine + H(+) = S-adenosyl 3-(methylsulfanyl)propylamine + CO2. It participates in amine and polyamine biosynthesis; S-adenosylmethioninamine biosynthesis; S-adenosylmethioninamine from S-adenosyl-L-methionine: step 1/1. Functionally, catalyzes the decarboxylation of S-adenosylmethionine to S-adenosylmethioninamine (dcAdoMet), the propylamine donor required for the synthesis of the polyamines spermine and spermidine from the diamine putrescine. The polypeptide is S-adenosylmethionine decarboxylase proenzyme (Thermotoga petrophila (strain ATCC BAA-488 / DSM 13995 / JCM 10881 / RKU-1)).